The primary structure comprises 249 residues: Exosome complex component Rrp41 (249 aa).

This sequence belongs to the RNase PH family. Rrp41 subfamily. Component of the archaeal exosome complex. Forms a hexameric ring-like arrangement composed of 3 Rrp41-Rrp42 heterodimers. The hexameric ring associates with a trimer of Rrp4 and/or Csl4 subunits.

Its subcellular location is the cytoplasm. Catalytic component of the exosome, which is a complex involved in RNA degradation. Has 3'-&gt;5' exoribonuclease activity. Can also synthesize heteromeric RNA-tails. This is Exosome complex component Rrp41 from Pyrococcus abyssi (strain GE5 / Orsay).